Consider the following 75-residue polypeptide: Small ribosomal subunit protein bS18 (75 aa).

Belongs to the bacterial ribosomal protein bS18 family. As to quaternary structure, part of the 30S ribosomal subunit. Forms a tight heterodimer with protein bS6.

In terms of biological role, binds as a heterodimer with protein bS6 to the central domain of the 16S rRNA, where it helps stabilize the platform of the 30S subunit. The sequence is that of Small ribosomal subunit protein bS18 from Baumannia cicadellinicola subsp. Homalodisca coagulata.